The chain runs to 631 residues: Tumor protein p73 (631 aa).

The interval 1–43 (MAQTSSSSSSTFEHLWSSLEPDSTYFDLPQPSQGTSEASGSEE) is transactivation. Disordered stretches follow at residues 23-43 (STYF…GSEE) and 69-113 (SRAA…NTDY). A Phosphothreonine; by PLK1 modification is found at Thr24. Tyr25 bears the Phosphotyrosine; by SRC and HCK mark. Composition is skewed to polar residues over residues 30–43 (QPSQ…GSEE) and 86–100 (PTHS…TFDT). Tyr91 bears the Phosphotyrosine; by ABL1 mark. The DNA-binding stretch occupies residues 123–302 (FQQSSTAKSA…DRKADEDHYR (180 aa)). The Zn(2+) site is built by Cys186, His189, Cys250, and Cys254. Positions 306–315 (ALNESTTKNG) are enriched in polar residues. The disordered stretch occupies residues 306–334 (ALNESTTKNGAASKRAFKQSPPAIPALGT). The tract at residues 337-372 (KKRRHGDEDMFYMHVRGRENFEILMKVKESLELMEL) is interaction with HIPK2. The tract at residues 337–378 (KKRRHGDEDMFYMHVRGRENFEILMKVKESLELMELVPQPLV) is oligomerization. The PPxY motif signature appears at 477–481 (PPPPY). The SAM domain occupies 479–545 (PPYHADPSLV…WRGLQDLKQS (67 aa)). Residue Lys622 forms a Glycyl lysine isopeptide (Lys-Gly) (interchain with G-Cter in SUMO); alternate linkage. Lys622 is covalently cross-linked (Glycyl lysine isopeptide (Lys-Gly) (interchain with G-Cter in SUMO2); alternate).

The protein belongs to the p53 family. Found in a complex with p53/TP53 and CABLES1. The C-terminal oligomerization domain binds to the ABL1 tyrosine kinase SH3 domain. Interacts with HECW2, HIPK2, RANBP9 and WWOX. Interacts (via SAM domain) with FBXO45 (via B30.2/SPRY domain). Interacts with YAP1 (phosphorylated form). Interacts with HCK (via SH3 domain); this inhibits TP73 activity and degradation. Interacts (via SAM domain) with NQO1; this interaction is NADH-dependent, stabilizes TP73 in response to oxidative stress and protects it from ubiquitin-independent degradation by the 20S proteasome. Zn(2+) serves as cofactor. Sumoylated on Lys-622, which potentiates proteasomal degradation but does not affect transcriptional activity. In terms of processing, phosphorylation by PLK1 and PLK3 inhibits the transcription regulator activity and pro-apoptotic function. Higher levels of phosphorylation seen in striatal neurons of. mutant huntingtin (htt) transgenic mice. Post-translationally, polyubiquitinated by RCHY1/PIRH2; leading to its degradation by the proteasome. As to expression, found in striatal neurons of mutant huntingtin (htt) transgenic mice (at protein level). Isoform 1 is expressed in the nasal epithelium, the vomeronasal organ, the hippocampus and the hypothalamus.

The protein localises to the nucleus. The protein resides in the cytoplasm. Participates in the apoptotic response to DNA damage. Isoforms containing the transactivation domain are pro-apoptotic, isoforms lacking the domain are anti-apoptotic and block the function of p53 and transactivating p73 isoforms. May be a tumor suppressor protein. Is an activator of FOXJ1 expression, essential for the positive regulation of lung ciliated cell differentiation. This chain is Tumor protein p73 (Tp73), found in Mus musculus (Mouse).